The following is a 562-amino-acid chain: NAD-dependent malic enzyme (562 aa).

Tyr101 functions as the Proton donor in the catalytic mechanism. Residue Arg154 participates in NAD(+) binding. Lys172 acts as the Proton acceptor in catalysis. Glu243, Asp244, and Asp267 together coordinate a divalent metal cation. 2 residues coordinate NAD(+): Asp267 and Asn415.

Belongs to the malic enzymes family. In terms of assembly, homotetramer. Mg(2+) serves as cofactor. It depends on Mn(2+) as a cofactor.

It catalyses the reaction (S)-malate + NAD(+) = pyruvate + CO2 + NADH. It carries out the reaction oxaloacetate + H(+) = pyruvate + CO2. This is NAD-dependent malic enzyme from Shewanella sp. (strain ANA-3).